The primary structure comprises 772 residues: Hyperosmolality-gated Ca2+ permeable channel 1.1 (772 aa).

At 1–5 the chain is on the extracellular side; sequence MATLK. A helical transmembrane segment spans residues 6–28; the sequence is DIGVSAGINILTAFIFFIIFAFL. The Cytoplasmic segment spans residues 29–100; it reads RLQPFNDRVY…AGLDSVVYLR (72 aa). The chain crosses the membrane as a helical span at residues 101–122; that stretch reads IYWLGLKIFAPIAMLAWAVLVP. Residues 123–159 lie on the Extracellular side of the membrane; that stretch reads VNWTNNELELAKHFKNVTSSDIDKLTISNIPEGSNRF. A glycan (N-linked (GlcNAc) asparagine) is linked at Asn-138. Residues 160–180 traverse the membrane as a helical segment; it reads WAHIIMAYAFTIWTCYMLMKE. Topologically, residues 181-372 are cytoplasmic; the sequence is YETVANMRLQ…PNLAIPYVSL (192 aa). Residues 339–344 form a cytoplasmic region required for homodimerization region; it reads QTTQTR. A helical transmembrane segment spans residues 373-398; sequence TVRRLVMNVAFFFLTFFFIIPIAFVQ. Over 399–424 the chain is Extracellular; the sequence is SLATIEGIEKVAPFLKVIIEKDFIKS. Residues 425 to 450 traverse the membrane as a helical segment; the sequence is LIQGLLAGIALKLFLIFLPAILMTMS. Residues 451–461 are Cytoplasmic-facing; that stretch reads KFEGFTSVSFL. The helical transmembrane segment at 462-485 threads the bilayer; sequence ERRSASRYYIFNLVNVFLGSVIAG. Topologically, residues 486–509 are extracellular; that stretch reads AAFEQLNSFLNQSPNQIPKTIGMA. A helical transmembrane segment spans residues 510 to 538; it reads IPMKATFFITYIMVDGWAGVAGEILMLKP. The Cytoplasmic portion of the chain corresponds to 539–566; sequence LIIYHLKNAFLVKTEKDREEAMNPGSIG. Residues 567–587 form a helical membrane-spanning segment; that stretch reads FNTGEPQIQLYFLLGLVYAPV. Thr-588 is a topological domain (extracellular). Residues 589–606 form a helical membrane-spanning segment; it reads PMLLPFILVFFALAYVVY. Topologically, residues 607-624 are cytoplasmic; that stretch reads RHQIINVYNQEYESAAAF. Residues 625–647 form a helical membrane-spanning segment; that stretch reads WPDVHGRVITALIISQLLLMGLL. Residues 648-653 are Extracellular-facing; that stretch reads GTKHAA. Residues 654-674 traverse the membrane as a helical segment; the sequence is SAAPFLIALPVITIGFHRFCK. At 675–772 the chain is on the cytoplasmic side; sequence GRFEPAFVRY…SLAVINGKEV (98 aa). The segment at 686–688 is cytoplasmic region required for homodimerization; that stretch reads LQE. A disordered region spans residues 743–772; the sequence is KRQSRRNTPAPSRISGESSPSLAVINGKEV. The segment covering 748 to 763 has biased composition (polar residues); that stretch reads RNTPAPSRISGESSPS.

It belongs to the CSC1 (TC 1.A.17) family. In terms of assembly, homodimer. In terms of tissue distribution, expressed in leaves, flowers, roots and guard cells.

It is found in the cell membrane. With respect to regulation, activated by mechanical pressure. Its function is as follows. Acts as a hyperosmolarity-gated non-selective cation channel that permeates Ca(2+) ions. Shows the following permeability sequence: K(+) &gt; Ba(2+) = Ca(2+) &gt; Na(+) = Mg(2+) = Cs(+). Mechanosensitive ion channel that converts mechanical stimuli into a flow of ions: activated in response to membrane stretch and poke. The protein is Hyperosmolality-gated Ca2+ permeable channel 1.1 of Arabidopsis thaliana (Mouse-ear cress).